Consider the following 422-residue polypeptide: Elongation factor 1-alpha (422 aa).

One can recognise a tr-type G domain in the interval 5 to 221 (KPHMNLAVIG…DELKEPEKPS (217 aa)). The segment at 14–21 (GHIDHGKS) is G1. Position 14 to 21 (14 to 21 (GHIDHGKS)) interacts with GTP. S21 is a binding site for Mg(2+). Residues 70-74 (GITID) are G2. A G3 region spans residues 91–94 (DCPG). Residues 91–95 (DCPGH) and 146–149 (NKMD) each bind GTP. The tract at residues 146–149 (NKMD) is G4. The G5 stretch occupies residues 185–187 (SAF).

Belongs to the TRAFAC class translation factor GTPase superfamily. Classic translation factor GTPase family. EF-Tu/EF-1A subfamily.

It localises to the cytoplasm. The catalysed reaction is GTP + H2O = GDP + phosphate + H(+). Its function is as follows. GTP hydrolase that promotes the GTP-dependent binding of aminoacyl-tRNA to the A-site of ribosomes during protein biosynthesis. The polypeptide is Elongation factor 1-alpha (Methanosarcina acetivorans (strain ATCC 35395 / DSM 2834 / JCM 12185 / C2A)).